A 556-amino-acid polypeptide reads, in one-letter code: MKSDIEIAQSVALQPITDIVKKVGIDGDDIELYGKYKAKLSFEKMKAVEANEPGKLILVTAINPTPAGEGKSTMSIGLADALNQMGKKTMLALREPSLGPVMGIKGGAAGGGYAQVLPMEDINLHFTGDMHAITTANNALSALIDNHLQQGNDLGIDPRRIIWKRVLDLNDRALRQVIVGLGSPVNGVPREDGFDITVASEIMAILCLATDLKDLKKRLADIVVAYTYDRKPVYVRDLKVEGALTLILKDAIKPNLVQTIYGTPALIHGGPFANIAHGCNSVLATSTALRLADYTVTEAGFGADLGAEKFLNIKVPNLPKAPDAIVIVATLRALKMHGGVAKSDLAAENCEAVRLGFANLKRHVENMRQFKVPVVVAINEFVADTEAEIATLKALCEEIKVPVELASVWANGAEGGLALAKTVVRVIDQEAADYKRLYSDEDTLEEKVINIVTQIYGGKAVQFGPKAKTQLKQFAEFGWDKLPVCMAKTQYSFSDNPSLLGAPTDFDITIREFVPKTGAGFIVGLTGDVMTMPGLPKVPAAMAMDVAENGTALGLF.

Residue 65-72 participates in ATP binding; sequence TPAGEGKS.

The protein belongs to the formate--tetrahydrofolate ligase family.

It catalyses the reaction (6S)-5,6,7,8-tetrahydrofolate + formate + ATP = (6R)-10-formyltetrahydrofolate + ADP + phosphate. It participates in one-carbon metabolism; tetrahydrofolate interconversion. This Streptococcus pyogenes serotype M1 protein is Formate--tetrahydrofolate ligase 1.